The primary structure comprises 388 residues: Dual-specificity RNA methyltransferase RlmN (388 aa).

E109 acts as the Proton acceptor in catalysis. The 240-residue stretch at 115-354 folds into the Radical SAM core domain; that stretch reads EDDRATLCVS…TIVRKTRGDD (240 aa). A disulfide bridge links C122 with C359. C129, C133, and C136 together coordinate [4Fe-4S] cluster. S-adenosyl-L-methionine-binding positions include 183–184, S215, 237–239, and N316; these read GE and SLH. C359 acts as the S-methylcysteine intermediate in catalysis.

The protein belongs to the radical SAM superfamily. RlmN family. The cofactor is [4Fe-4S] cluster.

It is found in the cytoplasm. The catalysed reaction is adenosine(2503) in 23S rRNA + 2 reduced [2Fe-2S]-[ferredoxin] + 2 S-adenosyl-L-methionine = 2-methyladenosine(2503) in 23S rRNA + 5'-deoxyadenosine + L-methionine + 2 oxidized [2Fe-2S]-[ferredoxin] + S-adenosyl-L-homocysteine. The enzyme catalyses adenosine(37) in tRNA + 2 reduced [2Fe-2S]-[ferredoxin] + 2 S-adenosyl-L-methionine = 2-methyladenosine(37) in tRNA + 5'-deoxyadenosine + L-methionine + 2 oxidized [2Fe-2S]-[ferredoxin] + S-adenosyl-L-homocysteine. Functionally, specifically methylates position 2 of adenine 2503 in 23S rRNA and position 2 of adenine 37 in tRNAs. m2A2503 modification seems to play a crucial role in the proofreading step occurring at the peptidyl transferase center and thus would serve to optimize ribosomal fidelity. This is Dual-specificity RNA methyltransferase RlmN from Salmonella typhimurium (strain LT2 / SGSC1412 / ATCC 700720).